A 225-amino-acid polypeptide reads, in one-letter code: MKLIVSVMPRSLEEAQALDDTRYLDADIIEWRADYLPKEAILQVAPAIFEKFAGRELVFTLRTRSEGGEIDLSPEEYIHLIKEVAQLYQPDYIDFEYYSYKDVFEEMLDFPNLVLSYHNFQETPENMMEILSELTILNPKLVKVAVMAHTEQDVLDLMNYTRGFKTLNPEQEYVTISMGKVGKVSRITADVTGSSWSFASLDEVSAPGQISLASMKKIREILDEA.

3-dehydroquinate contacts are provided by residues serine 6, 30 to 32 (EWR), and arginine 62. Catalysis depends on histidine 118, which acts as the Proton donor/acceptor. Lysine 143 functions as the Schiff-base intermediate with substrate in the catalytic mechanism. The 3-dehydroquinate site is built by arginine 186, serine 205, and glutamine 209.

The protein belongs to the type-I 3-dehydroquinase family. As to quaternary structure, homodimer.

The catalysed reaction is 3-dehydroquinate = 3-dehydroshikimate + H2O. Its pathway is metabolic intermediate biosynthesis; chorismate biosynthesis; chorismate from D-erythrose 4-phosphate and phosphoenolpyruvate: step 3/7. Involved in the third step of the chorismate pathway, which leads to the biosynthesis of aromatic amino acids. Catalyzes the cis-dehydration of 3-dehydroquinate (DHQ) and introduces the first double bond of the aromatic ring to yield 3-dehydroshikimate. The polypeptide is 3-dehydroquinate dehydratase (Streptococcus pneumoniae (strain P1031)).